The following is a 469-amino-acid chain: Keratin, type II cytoskeletal 7 (469 aa).

N-acetylserine is present on Ser2. A phosphoserine mark is found at Ser2, Ser6, and Ser7. The interval Ser2–Glu90 is head. Ser12 is a glycosylation site (O-linked (GlcNAc) serine). Position 20 is a dimethylated arginine; alternate (Arg20). Residue Arg20 is modified to Omega-N-methylarginine; alternate. A phosphoserine mark is found at Ser53, Ser71, and Ser83. Residues Glu90–Leu126 form a coil 1A region. The region spanning Glu91–Leu403 is the IF rod domain. A Phosphothreonine modification is found at Thr97. A linker 1 region spans residues Gln127–Gln144. A Glycyl lysine isopeptide (Lys-Gly) (interchain with G-Cter in SUMO2) cross-link involves residue Lys130. Residues Ile145–Leu236 form a coil 1B region. The residue at position 179 (Lys179) is an N6-acetyllysine. Residues Gln237 to Ile260 form a linker 12 region. A phosphoserine mark is found at Ser252 and Ser254. Positions Ile261–Glu399 are coil 2. Glycyl lysine isopeptide (Lys-Gly) (interchain with G-Cter in SUMO2) cross-links involve residues Lys265 and Lys286. Thr289 bears the Phosphothreonine mark. Residues Lys296 and Lys331 each participate in a glycyl lysine isopeptide (Lys-Gly) (interchain with G-Cter in SUMO2) cross-link. The tail stretch occupies residues Glu400–Asn469.

This sequence belongs to the intermediate filament family. In terms of assembly, heterotetramer of two type I and two type II keratins. Interacts with eukaryotic translation initiator factor 3 (eIF3) subunit EIF3S10. Interacts with GPER1. Arg-20 is dimethylated, probably to asymmetric dimethylarginine.

Its function is as follows. Blocks interferon-dependent interphase and stimulates DNA synthesis in cells. This Pan troglodytes (Chimpanzee) protein is Keratin, type II cytoskeletal 7.